A 515-amino-acid chain; its full sequence is 2-isopropylmalate synthase (515 aa).

The Pyruvate carboxyltransferase domain maps to 5–267 (VIIFDTTLRD…RTGINHEEIH (263 aa)). Mn(2+)-binding residues include D14, H202, H204, and N238. The regulatory domain stretch occupies residues 392 to 515 (KLNYLSVQSG…EMKQKKIATV (124 aa)).

Belongs to the alpha-IPM synthase/homocitrate synthase family. LeuA type 1 subfamily. Homodimer. The cofactor is Mn(2+).

It is found in the cytoplasm. The enzyme catalyses 3-methyl-2-oxobutanoate + acetyl-CoA + H2O = (2S)-2-isopropylmalate + CoA + H(+). It functions in the pathway amino-acid biosynthesis; L-leucine biosynthesis; L-leucine from 3-methyl-2-oxobutanoate: step 1/4. Catalyzes the condensation of the acetyl group of acetyl-CoA with 3-methyl-2-oxobutanoate (2-ketoisovalerate) to form 3-carboxy-3-hydroxy-4-methylpentanoate (2-isopropylmalate). This chain is 2-isopropylmalate synthase, found in Vibrio vulnificus (strain CMCP6).